The sequence spans 426 residues: Glutamate-1-semialdehyde 2,1-aminomutase (426 aa).

Lys265 is modified (N6-(pyridoxal phosphate)lysine).

The protein belongs to the class-III pyridoxal-phosphate-dependent aminotransferase family. HemL subfamily. Homodimer. Pyridoxal 5'-phosphate serves as cofactor.

The protein resides in the cytoplasm. The enzyme catalyses (S)-4-amino-5-oxopentanoate = 5-aminolevulinate. Its pathway is porphyrin-containing compound metabolism; protoporphyrin-IX biosynthesis; 5-aminolevulinate from L-glutamyl-tRNA(Glu): step 2/2. In Yersinia enterocolitica serotype O:8 / biotype 1B (strain NCTC 13174 / 8081), this protein is Glutamate-1-semialdehyde 2,1-aminomutase.